The following is a 212-amino-acid chain: Ribosomal RNA small subunit methyltransferase G (212 aa).

Residues G75, L80, 126 to 127 (AQ), and R141 contribute to the S-adenosyl-L-methionine site.

This sequence belongs to the methyltransferase superfamily. RNA methyltransferase RsmG family.

Its subcellular location is the cytoplasm. Its function is as follows. Specifically methylates the N7 position of guanine in position 518 of 16S rRNA. The protein is Ribosomal RNA small subunit methyltransferase G of Beutenbergia cavernae (strain ATCC BAA-8 / DSM 12333 / CCUG 43141 / JCM 11478 / NBRC 16432 / NCIMB 13614 / HKI 0122).